Consider the following 1673-residue polypeptide: Leucine-rich repeat- and IQ domain-containing protein 1 (1673 aa).

Disordered regions lie at residues 22 to 48 and 189 to 208; these read ISISSLENDEVENDSVSDTQSDSSDTD and LEEKDKETLEAQNEREKRTF. Residues 34–59 form an LRR 1 repeat; that stretch reads NDSVSDTQSDSSDTDLLELPESVLHY. The stretch at 216–239 is one LRR 2 repeat; the sequence is QCWMRQFEVEKKHLEDLQKQDQDK. Residues 291–320 form the IQ 1 domain; it reads RYDAAVKIQATYRASVTYRKYSPIIKEQME. The segment at 324–374 is disordered; that stretch reads RRAQELKEKEAKIRQKEEEKRRRLEEEQRVEEEKKKKMLEERRRREREYEE. Positions 326–374 are enriched in basic and acidic residues; it reads AQELKEKEAKIRQKEEEKRRRLEEEQRVEEEKKKKMLEERRRREREYEE. One copy of the LRR 3 repeat lies at 491–516; it reads LPKLKINENLSKNQCSEQPSDQEFNA. 2 disordered regions span residues 544-658 and 679-702; these read ESDT…EEIP and EGEADLQDSASGKLAPSEEAGSHS. Composition is skewed to basic and acidic residues over residues 549 to 567 and 588 to 602; these read TEEHVEHVREEKVGQETEK and EETREGLAEEIEIKE. Over residues 603–629 the composition is skewed to polar residues; sequence MTQQGGPSDENNSSPISMQKSLPSLTP. An LRR 4 repeat occupies 641-665; that stretch reads LEEDQETDLKSERIEEIPEEGVLSC. A compositionally biased stretch (basic and acidic residues) spans 647–656; sequence TDLKSERIEE. LRR repeat units follow at residues 830–852, 853–873, 874–894, 895–919, 921–939, 940–961, 962–983, 984–1005, 1007–1029, 1030–1054, and 1067–1090; these read CSNLQILSLRRCGLTSLQGLSHC, TRLKYIDAQENHIEAISCENL, ENLSVVLLNNNLLTSIHGFDG, CTNLQSLELSHNKITRISGLESLKY, QELTVDHNQLISTKGLCEA, PTIVYLDCSHNHLTGIDGIGNC, GLLQIIKLQGNYLREPPSLRNH, VLLRELHLDDNSISSVEGLSSC, LPLLQYLSISQNSLATIVPLFHL, VSLEKLDVSNNCLSDLTNVMCWFNA, and PVLQEINWRDSILKTLPALRVLNG. Disordered regions lie at residues 1163 to 1230 and 1308 to 1330; these read AHEQ…HCEE and PTTTEPLQDPLINNQTTSNEERR. Composition is skewed to polar residues over residues 1168-1226 and 1308-1325; these read DVNT…PSTS and PTTTEPLQDPLINNQTTS. IQ domains are found at residues 1280–1309 and 1340–1369; these read PTKAAMVIQAQWRSYIAHRQINCSAEMHPT and REKAALHIQAVWKGFILRKKLATARKAIKD. An LRR 16 repeat occupies 1378 to 1405; the sequence is EIDLEDFEFDEDALEKDWPALDSTGFPS.

This chain is Leucine-rich repeat- and IQ domain-containing protein 1 (Lrriq1), found in Mus musculus (Mouse).